Consider the following 197-residue polypeptide: RNA pyrophosphohydrolase (197 aa).

One can recognise a Nudix hydrolase domain in the interval 6-150 (GYRPNVGIVI…KRDVYRKVMR (145 aa)). Residues 38–59 (GGINEGENIETAMYRELYEEVG) carry the Nudix box motif.

The protein belongs to the Nudix hydrolase family. RppH subfamily. Requires a divalent metal cation as cofactor.

Accelerates the degradation of transcripts by removing pyrophosphate from the 5'-end of triphosphorylated RNA, leading to a more labile monophosphorylated state that can stimulate subsequent ribonuclease cleavage. The protein is RNA pyrophosphohydrolase of Haemophilus ducreyi (strain 35000HP / ATCC 700724).